The following is a 183-amino-acid chain: Pyruvoyl-dependent arginine decarboxylase (183 aa).

Ser44 is subject to Pyruvic acid (Ser).

This sequence belongs to the PdaD family. The cofactor is pyruvate.

The catalysed reaction is L-arginine + H(+) = agmatine + CO2. The protein is Pyruvoyl-dependent arginine decarboxylase of Nitrosopumilus maritimus (strain SCM1).